A 131-amino-acid polypeptide reads, in one-letter code: Phosphoribosyl-AMP cyclohydrolase (131 aa).

Asp-89 contacts Mg(2+). Cys-90 lines the Zn(2+) pocket. Mg(2+) contacts are provided by Asp-91 and Asp-93. Zn(2+) is bound by residues Cys-106 and Cys-113.

Belongs to the PRA-CH family. In terms of assembly, homodimer. The cofactor is Mg(2+). Zn(2+) serves as cofactor.

Its subcellular location is the cytoplasm. The enzyme catalyses 1-(5-phospho-beta-D-ribosyl)-5'-AMP + H2O = 1-(5-phospho-beta-D-ribosyl)-5-[(5-phospho-beta-D-ribosylamino)methylideneamino]imidazole-4-carboxamide. It participates in amino-acid biosynthesis; L-histidine biosynthesis; L-histidine from 5-phospho-alpha-D-ribose 1-diphosphate: step 3/9. Its function is as follows. Catalyzes the hydrolysis of the adenine ring of phosphoribosyl-AMP. This chain is Phosphoribosyl-AMP cyclohydrolase, found in Bifidobacterium longum (strain DJO10A).